The sequence spans 714 residues: Polyribonucleotide nucleotidyltransferase (714 aa).

Positions 490 and 496 each coordinate Mg(2+). One can recognise a KH domain in the interval Pro-556–Ile-615. Residues Gly-625–Lys-693 enclose the S1 motif domain.

This sequence belongs to the polyribonucleotide nucleotidyltransferase family. Requires Mg(2+) as cofactor.

Its subcellular location is the cytoplasm. It carries out the reaction RNA(n+1) + phosphate = RNA(n) + a ribonucleoside 5'-diphosphate. Functionally, involved in mRNA degradation. Catalyzes the phosphorolysis of single-stranded polyribonucleotides processively in the 3'- to 5'-direction. This Ruegeria pomeroyi (strain ATCC 700808 / DSM 15171 / DSS-3) (Silicibacter pomeroyi) protein is Polyribonucleotide nucleotidyltransferase.